The following is a 476-amino-acid chain: Proline--tRNA ligase 2 (476 aa).

The protein belongs to the class-II aminoacyl-tRNA synthetase family. ProS type 3 subfamily. As to quaternary structure, homodimer.

The protein resides in the cytoplasm. The catalysed reaction is tRNA(Pro) + L-proline + ATP = L-prolyl-tRNA(Pro) + AMP + diphosphate. Catalyzes the attachment of proline to tRNA(Pro) in a two-step reaction: proline is first activated by ATP to form Pro-AMP and then transferred to the acceptor end of tRNA(Pro). This is Proline--tRNA ligase 2 from Bacillus thuringiensis subsp. konkukian (strain 97-27).